Reading from the N-terminus, the 473-residue chain is Aspartyl/glutamyl-tRNA(Asn/Gln) amidotransferase subunit B (473 aa).

This sequence belongs to the GatB/GatE family. GatB subfamily. In terms of assembly, heterotrimer of A, B and C subunits.

It catalyses the reaction L-glutamyl-tRNA(Gln) + L-glutamine + ATP + H2O = L-glutaminyl-tRNA(Gln) + L-glutamate + ADP + phosphate + H(+). The catalysed reaction is L-aspartyl-tRNA(Asn) + L-glutamine + ATP + H2O = L-asparaginyl-tRNA(Asn) + L-glutamate + ADP + phosphate + 2 H(+). Functionally, allows the formation of correctly charged Asn-tRNA(Asn) or Gln-tRNA(Gln) through the transamidation of misacylated Asp-tRNA(Asn) or Glu-tRNA(Gln) in organisms which lack either or both of asparaginyl-tRNA or glutaminyl-tRNA synthetases. The reaction takes place in the presence of glutamine and ATP through an activated phospho-Asp-tRNA(Asn) or phospho-Glu-tRNA(Gln). In Francisella tularensis subsp. mediasiatica (strain FSC147), this protein is Aspartyl/glutamyl-tRNA(Asn/Gln) amidotransferase subunit B.